The chain runs to 331 residues: Lipoyl synthase (331 aa).

A disordered region spans residues 1–20 (MTTETNPAVTPAYNPSEKQK). The [4Fe-4S] cluster site is built by C71, C76, C82, C97, C101, C104, and S311. The region spanning 82 to 300 (CFGKGTATFM…EEEAYKMGFA (219 aa)) is the Radical SAM core domain.

The protein belongs to the radical SAM superfamily. Lipoyl synthase family. [4Fe-4S] cluster is required as a cofactor.

Its subcellular location is the cytoplasm. The catalysed reaction is [[Fe-S] cluster scaffold protein carrying a second [4Fe-4S](2+) cluster] + N(6)-octanoyl-L-lysyl-[protein] + 2 oxidized [2Fe-2S]-[ferredoxin] + 2 S-adenosyl-L-methionine + 4 H(+) = [[Fe-S] cluster scaffold protein] + N(6)-[(R)-dihydrolipoyl]-L-lysyl-[protein] + 4 Fe(3+) + 2 hydrogen sulfide + 2 5'-deoxyadenosine + 2 L-methionine + 2 reduced [2Fe-2S]-[ferredoxin]. Its pathway is protein modification; protein lipoylation via endogenous pathway; protein N(6)-(lipoyl)lysine from octanoyl-[acyl-carrier-protein]: step 2/2. Its function is as follows. Catalyzes the radical-mediated insertion of two sulfur atoms into the C-6 and C-8 positions of the octanoyl moiety bound to the lipoyl domains of lipoate-dependent enzymes, thereby converting the octanoylated domains into lipoylated derivatives. This Janthinobacterium sp. (strain Marseille) (Minibacterium massiliensis) protein is Lipoyl synthase.